The primary structure comprises 362 residues: Large ribosomal subunit protein uL3 (362 aa).

A disordered region spans residues 340-362 (RPPKKKPPVQRPQITYVSVESKQ). Over residues 351 to 362 (PQITYVSVESKQ) the composition is skewed to polar residues.

Belongs to the universal ribosomal protein uL3 family. Part of the 50S ribosomal subunit. Forms a cluster with proteins L14 and L24e.

Functionally, one of the primary rRNA binding proteins, it binds directly near the 3'-end of the 23S rRNA, where it nucleates assembly of the 50S subunit. The protein is Large ribosomal subunit protein uL3 of Pyrococcus horikoshii (strain ATCC 700860 / DSM 12428 / JCM 9974 / NBRC 100139 / OT-3).